The primary structure comprises 201 residues: Dimethylsulfoniopropionate lyase DddQ (201 aa).

Positions 130, 134, 136, and 169 each coordinate a divalent metal cation.

This sequence belongs to the non-heme iron-dependent dioxygenase family. In terms of assembly, homodimer. A divalent metal cation serves as cofactor.

The enzyme catalyses S,S-dimethyl-beta-propiothetin = acrylate + dimethyl sulfide + H(+). In terms of biological role, may act as a dimethylsulfoniopropionate (DMSP) in vitro, releasing dimethyl sulfide (DMS). DMS is the principal form by which sulfur is transported from oceans to the atmosphere. The real activity of the protein is however subject to debate and it is unclear whether it constitutes a real dimethylsulfoniopropionate lyase in vivo. The protein is Dimethylsulfoniopropionate lyase DddQ of Ruegeria pomeroyi (strain ATCC 700808 / DSM 15171 / DSS-3) (Silicibacter pomeroyi).